Here is a 78-residue protein sequence, read N- to C-terminus: Acyl carrier protein (78 aa).

In terms of domain architecture, Carrier spans 2 to 77 (STIEERVKKI…AAIDYVKAHQ (76 aa)). Serine 37 is modified (O-(pantetheine 4'-phosphoryl)serine).

It belongs to the acyl carrier protein (ACP) family. In terms of processing, 4'-phosphopantetheine is transferred from CoA to a specific serine of apo-ACP by AcpS. This modification is essential for activity because fatty acids are bound in thioester linkage to the sulfhydryl of the prosthetic group.

The protein resides in the cytoplasm. Its pathway is lipid metabolism; fatty acid biosynthesis. Carrier of the growing fatty acid chain in fatty acid biosynthesis. The polypeptide is Acyl carrier protein (Pseudomonas putida (strain ATCC 47054 / DSM 6125 / CFBP 8728 / NCIMB 11950 / KT2440)).